A 303-amino-acid chain; its full sequence is Phosphate import ATP-binding protein PstB (303 aa).

Positions 56–298 (LSTSDVHVYY…PDHQLTEAYI (243 aa)) constitute an ABC transporter domain. ATP is bound at residue 88–95 (GPSGCGKS).

The protein belongs to the ABC transporter superfamily. Phosphate importer (TC 3.A.1.7) family. As to quaternary structure, the complex is composed of two ATP-binding proteins (PstB), two transmembrane proteins (PstC and PstA) and a solute-binding protein (PstS).

It localises to the cell inner membrane. It catalyses the reaction phosphate(out) + ATP + H2O = ADP + 2 phosphate(in) + H(+). Its function is as follows. Part of the ABC transporter complex PstSACB involved in phosphate import. Responsible for energy coupling to the transport system. This is Phosphate import ATP-binding protein PstB from Acinetobacter baylyi (strain ATCC 33305 / BD413 / ADP1).